Reading from the N-terminus, the 169-residue chain is Phosphopantetheine adenylyltransferase (169 aa).

Threonine 9 provides a ligand contact to substrate. Residues 9–10 and histidine 17 contribute to the ATP site; that span reads TF. Substrate is bound by residues lysine 41, leucine 73, and arginine 87. ATP contacts are provided by residues 88-90, glutamate 98, and 123-129; these read GLR and YQFISGT.

The protein belongs to the bacterial CoaD family. As to quaternary structure, homohexamer. The cofactor is Mg(2+).

It localises to the cytoplasm. The catalysed reaction is (R)-4'-phosphopantetheine + ATP + H(+) = 3'-dephospho-CoA + diphosphate. It functions in the pathway cofactor biosynthesis; coenzyme A biosynthesis; CoA from (R)-pantothenate: step 4/5. Functionally, reversibly transfers an adenylyl group from ATP to 4'-phosphopantetheine, yielding dephospho-CoA (dPCoA) and pyrophosphate. The sequence is that of Phosphopantetheine adenylyltransferase from Bordetella bronchiseptica (strain ATCC BAA-588 / NCTC 13252 / RB50) (Alcaligenes bronchisepticus).